Consider the following 279-residue polypeptide: Release factor glutamine methyltransferase (279 aa).

Residues Glu-141 and Asn-187 each coordinate S-adenosyl-L-methionine. Residue 187 to 190 (NPPY) coordinates substrate.

The protein belongs to the protein N5-glutamine methyltransferase family. PrmC subfamily.

It catalyses the reaction L-glutaminyl-[peptide chain release factor] + S-adenosyl-L-methionine = N(5)-methyl-L-glutaminyl-[peptide chain release factor] + S-adenosyl-L-homocysteine + H(+). In terms of biological role, methylates the class 1 translation termination release factors RF1/PrfA and RF2/PrfB on the glutamine residue of the universally conserved GGQ motif. The protein is Release factor glutamine methyltransferase of Corynebacterium glutamicum (strain ATCC 13032 / DSM 20300 / JCM 1318 / BCRC 11384 / CCUG 27702 / LMG 3730 / NBRC 12168 / NCIMB 10025 / NRRL B-2784 / 534).